We begin with the raw amino-acid sequence, 541 residues long: Man(5)GlcNAc(2)-PP-dolichol translocation protein RFT1 (541 aa).

11 consecutive transmembrane segments (helical) span residues 16–36 (SGLLLQVLFRLITFVLNAFIL), 45–62 (GIVNVRLTLLYSTTTFLA), 85–105 (LLWLTVPLGIFWSSCLGWVWL), 123–143 (VLFFGLSAVVELLGEPFWVLA), 154–176 (LAESMSVILRSVLTALLVLWLPH), 187–207 (LLYTTVLVLCYAIYLIQLLRS), 335–355 (LALLTGLTMTVFGFAYSQLAL), 376–396 (CLYVLLLAINGVTECFMFAAM), 414–434 (SFLVLSYLLTSWCGSVGFIMA), 470–490 (VLLGVFILSAGITSVSEAFLC), and 499–519 (LAHIAVGTICLGVTLGTAFLT).

Belongs to the RFT1 family.

It is found in the endoplasmic reticulum membrane. It participates in protein modification; protein glycosylation. Intramembrane glycolipid transporter that operates in the biosynthetic pathway of dolichol-linked oligosaccharides, the glycan precursors employed in protein asparagine (N)-glycosylation. The sequential addition of sugars to dolichol pyrophosphate produces dolichol-linked oligosaccharides containing fourteen sugars, including two GlcNAcs, nine mannoses and three glucoses. Once assembled, the oligosaccharide is transferred from the lipid to nascent proteins by oligosaccharyltransferases. The assembly of dolichol-linked oligosaccharides begins on the cytosolic side of the endoplasmic reticulum membrane and finishes in its lumen. RFT1 could mediate the translocation of the cytosolically oriented intermediate DolPP-GlcNAc2Man5, produced by ALG11, into the ER lumen where dolichol-linked oligosaccharides assembly continues. However, the intramembrane lipid transporter activity could not be confirmed in vitro. This chain is Man(5)GlcNAc(2)-PP-dolichol translocation protein RFT1, found in Mus musculus (Mouse).